Consider the following 156-residue polypeptide: Ribosomal RNA large subunit methyltransferase H (156 aa).

S-adenosyl-L-methionine is bound by residues Leu73, Gly104, and 123–128 (LSPLTL).

The protein belongs to the RNA methyltransferase RlmH family. As to quaternary structure, homodimer.

The protein localises to the cytoplasm. The catalysed reaction is pseudouridine(1915) in 23S rRNA + S-adenosyl-L-methionine = N(3)-methylpseudouridine(1915) in 23S rRNA + S-adenosyl-L-homocysteine + H(+). Specifically methylates the pseudouridine at position 1915 (m3Psi1915) in 23S rRNA. The protein is Ribosomal RNA large subunit methyltransferase H of Pectobacterium atrosepticum (strain SCRI 1043 / ATCC BAA-672) (Erwinia carotovora subsp. atroseptica).